A 127-amino-acid chain; its full sequence is DNA-directed RNA polymerase subunit omega (127 aa).

Belongs to the RNA polymerase subunit omega family. In terms of assembly, the RNAP catalytic core consists of 2 alpha, 1 beta, 1 beta' and 1 omega subunit. When a sigma factor is associated with the core the holoenzyme is formed, which can initiate transcription.

The enzyme catalyses RNA(n) + a ribonucleoside 5'-triphosphate = RNA(n+1) + diphosphate. Functionally, promotes RNA polymerase assembly. Latches the N- and C-terminal regions of the beta' subunit thereby facilitating its interaction with the beta and alpha subunits. This Rickettsia canadensis (strain McKiel) protein is DNA-directed RNA polymerase subunit omega.